Here is a 527-residue protein sequence, read N- to C-terminus: NADH-ubiquinone oxidoreductase chain 5 (527 aa).

14 helical membrane-spanning segments follow: residues 3–23, 43–63, 75–95, 98–118, 141–161, 168–188, 197–217, 226–246, 263–283, 318–338, 357–377, 398–418, 432–452, and 507–527; these read ISIF…WLMP, FYFN…SVLV, FNYY…LNFS, IFTM…LVLF, FMFV…SFSM, LLLL…SWLP, VSSL…LMNF, FISF…LASL, MGFS…IHLV, LPNF…GLIF, YMMF…GYSF, VFMN…LWWM, VDFF…FLIL, and YLKS…FMIC.

This sequence belongs to the complex I subunit 5 family.

It localises to the mitochondrion inner membrane. It catalyses the reaction a ubiquinone + NADH + 5 H(+)(in) = a ubiquinol + NAD(+) + 4 H(+)(out). In terms of biological role, core subunit of the mitochondrial membrane respiratory chain NADH dehydrogenase (Complex I) that is believed to belong to the minimal assembly required for catalysis. Complex I functions in the transfer of electrons from NADH to the respiratory chain. The immediate electron acceptor for the enzyme is believed to be ubiquinone. The polypeptide is NADH-ubiquinone oxidoreductase chain 5 (Caenorhabditis elegans).